We begin with the raw amino-acid sequence, 376 residues long: MYG1 exonuclease (376 aa).

Residues 1-47 constitute a mitochondrion transit peptide; the sequence is MGHRFLRGLLTLLLPPPPLYTRHRMLGPESVPPPKRSRSKLMAPPRI. At S120 the chain carries Phosphoserine. Residues K267 and K273 each carry the N6-acetyllysine modification.

This sequence belongs to the MYG1 family. As to expression, ubiquitously expressed, with highest levels in testis.

The protein resides in the nucleus. It localises to the nucleoplasm. It is found in the mitochondrion matrix. Its subcellular location is the nucleolus. 3'-5' RNA exonuclease which cleaves in situ on specific transcripts in both nucleus and mitochondrion. Involved in regulating spatially segregated organellar RNA processing, acts as a coordinator of nucleo-mitochondrial crosstalk. In nucleolus, processes pre-ribosomal RNA involved in ribosome assembly and alters cytoplasmic translation. In mitochondrial matrix, processes 3'-termini of the mito-ribosomal and messenger RNAs and controls translation of mitochondrial proteins. The protein is MYG1 exonuclease of Homo sapiens (Human).